The following is a 387-amino-acid chain: Eukaryotic translation initiation factor 3 subunit M (387 aa).

One can recognise a PCI domain in the interval 181–340 (RSSKVMIELL…RKVHISSTMH (160 aa)).

Belongs to the eIF-3 subunit M family. As to quaternary structure, component of the eukaryotic translation initiation factor 3 (eIF-3) complex. The eIF-3 complex interacts with pix.

Its subcellular location is the cytoplasm. It is found in the golgi apparatus. Functionally, component of the eukaryotic translation initiation factor 3 (eIF-3) complex, which is involved in protein synthesis of a specialized repertoire of mRNAs and, together with other initiation factors, stimulates binding of mRNA and methionyl-tRNAi to the 40S ribosome. The eIF-3 complex specifically targets and initiates translation of a subset of mRNAs involved in cell proliferation. The protein is Eukaryotic translation initiation factor 3 subunit M of Drosophila willistoni (Fruit fly).